An 86-amino-acid chain; its full sequence is MQIDKNGIIKSAQLHDKDVGSIQVQVSLLTSQIKQLTDHLLANKKDFISKRGLYAKVSKRKRLLKYLKHNDLEAYRNLVKTLNLRG.

Belongs to the universal ribosomal protein uS15 family. As to quaternary structure, part of the 30S ribosomal subunit. Forms a bridge to the 50S subunit in the 70S ribosome, contacting the 23S rRNA.

One of the primary rRNA binding proteins, it binds directly to 16S rRNA where it helps nucleate assembly of the platform of the 30S subunit by binding and bridging several RNA helices of the 16S rRNA. In terms of biological role, forms an intersubunit bridge (bridge B4) with the 23S rRNA of the 50S subunit in the ribosome. The polypeptide is Small ribosomal subunit protein uS15 (Mycoplasma pneumoniae (strain ATCC 29342 / M129 / Subtype 1) (Mycoplasmoides pneumoniae)).